The sequence spans 311 residues: Succinate dehydrogenase [ubiquinone] iron-sulfur subunit 2, mitochondrial (311 aa).

A mitochondrion-targeting transit peptide spans 1–63 (MILRRTLPRL…EEIRDHRRGD (63 aa)). The interval 1–70 (MILRRTLPRL…RGDAAAASPA (70 aa)) is disordered. Over residues 51-63 (AKEEEIRDHRRGD) the composition is skewed to basic and acidic residues. The 92-residue stretch at 77 to 168 (FRVYRWSPDA…ATTVTPLPHM (92 aa)) folds into the 2Fe-2S ferredoxin-type domain. [2Fe-2S] cluster-binding residues include cysteine 128, cysteine 133, and cysteine 148. Positions 211–241 (ERKRLDGLYECILCACCSAACPSYWWNAEAF) constitute a 4Fe-4S ferredoxin-type domain. [4Fe-4S] cluster is bound by residues cysteine 221, cysteine 224, and cysteine 227. [3Fe-4S] cluster is bound at residue cysteine 231. Tryptophan 236 is a binding site for a ubiquinone. Positions 279 and 285 each coordinate [3Fe-4S] cluster. Cysteine 289 is a [4Fe-4S] cluster binding site.

The protein belongs to the succinate dehydrogenase/fumarate reductase iron-sulfur protein family. In terms of assembly, component of complex II composed of eight subunits in plants: four classical SDH subunits SDH1, SDH2, SDH3 and SDH4 (a flavoprotein (FP), an iron-sulfur protein (IP), and a cytochrome b composed of a large and a small subunit.), as well as four subunits unknown in mitochondria from bacteria and heterotrophic eukaryotes. [2Fe-2S] cluster serves as cofactor. [3Fe-4S] cluster is required as a cofactor. Requires [4Fe-4S] cluster as cofactor.

It is found in the mitochondrion inner membrane. It catalyses the reaction a quinone + succinate = fumarate + a quinol. Its pathway is carbohydrate metabolism; tricarboxylic acid cycle; fumarate from succinate (eukaryal route): step 1/1. Functionally, iron-sulfur protein (IP) subunit of succinate dehydrogenase (SDH) that is involved in complex II of the mitochondrial electron transport chain and is responsible for transferring electrons from succinate to ubiquinone (coenzyme Q). The sequence is that of Succinate dehydrogenase [ubiquinone] iron-sulfur subunit 2, mitochondrial from Oryza sativa subsp. japonica (Rice).